The following is a 1077-amino-acid chain: ATP-dependent helicase/deoxyribonuclease subunit B (1077 aa).

It belongs to the helicase family. AddB/RexB type 2 subfamily. As to quaternary structure, heterodimer of AddA and RexB. The cofactor is Mg(2+).

The heterodimer acts as both an ATP-dependent DNA helicase and an ATP-dependent, dual-direction single-stranded exonuclease. Recognizes the chi site generating a DNA molecule suitable for the initiation of homologous recombination. This subunit has 5' -&gt; 3' nuclease activity but not helicase activity. The sequence is that of ATP-dependent helicase/deoxyribonuclease subunit B from Streptococcus agalactiae serotype III (strain NEM316).